We begin with the raw amino-acid sequence, 610 residues long: UvrABC system protein C (610 aa).

The GIY-YIG domain maps to 16-94 (SQPGVYRMYD…IKLYQPRYNV (79 aa)). The 36-residue stretch at 204–239 (DQVLTQLISRMETASQNLEFEEAARIRDQIQAVRRV) folds into the UVR domain.

This sequence belongs to the UvrC family. Interacts with UvrB in an incision complex.

The protein resides in the cytoplasm. Its function is as follows. The UvrABC repair system catalyzes the recognition and processing of DNA lesions. UvrC both incises the 5' and 3' sides of the lesion. The N-terminal half is responsible for the 3' incision and the C-terminal half is responsible for the 5' incision. The sequence is that of UvrABC system protein C from Escherichia coli O45:K1 (strain S88 / ExPEC).